Consider the following 155-residue polypeptide: MIRIVRAELHGITVTGADLDYHGSITLDPEHCDLAGIRPLEFVDIWNKQSGARISTYVIFGEAGSKCCILNGAAARTCQRGDQVIICSSSYVEETALYDTAPMVLTFTPKNDVKDVLRYRVKETARRPFDFFIETLPRAENSDVDDGSAADRAIA.

The active-site Schiff-base intermediate with substrate; via pyruvic acid is the Ser24. Ser24 bears the Pyruvic acid (Ser) mark. Substrate is bound at residue Thr56. Tyr57 serves as the catalytic Proton donor. 72–74 (GAA) provides a ligand contact to substrate.

It belongs to the PanD family. As to quaternary structure, heterooctamer of four alpha and four beta subunits. Pyruvate serves as cofactor. Is synthesized initially as an inactive proenzyme, which is activated by self-cleavage at a specific serine bond to produce a beta-subunit with a hydroxyl group at its C-terminus and an alpha-subunit with a pyruvoyl group at its N-terminus.

It localises to the cytoplasm. The catalysed reaction is L-aspartate + H(+) = beta-alanine + CO2. It functions in the pathway cofactor biosynthesis; (R)-pantothenate biosynthesis; beta-alanine from L-aspartate: step 1/1. Functionally, catalyzes the pyruvoyl-dependent decarboxylation of aspartate to produce beta-alanine. In Agrobacterium fabrum (strain C58 / ATCC 33970) (Agrobacterium tumefaciens (strain C58)), this protein is Aspartate 1-decarboxylase.